Here is a 630-residue protein sequence, read N- to C-terminus: A disintegrin and metalloproteinase with thrombospondin motifs 4 (630 aa).

Positions 1–5 (RRTKR) are excised as a propeptide. Positions 11 to 221 (RFVETLVVAD…GYGHCLLDKP (211 aa)) constitute a Peptidase M12B domain. Intrachain disulfides connect C86–C138, C115–C120, C132–C216, C170–C200, C242–C265, C253–C275, C260–C294, C288–C299, C325–C362, C329–C367, and C340–C352. N96 carries an N-linked (GlcNAc...) asparagine glycan. Residue H154 participates in Zn(2+) binding. E155 is an active-site residue. The Zn(2+) site is built by H158 and H164. The Disintegrin domain maps to 233 to 303 (GKDYDADRQC…CMGGRCLHVD (71 aa)). A TSP type-1 domain is found at 313–368 (AGGWGPWGPWGDCSRTCGGGVQFSSRDCTKPVPRNGGKYCEGRRTPFRSCNTKNCP). N-linked (GlcNAc...) asparagine glycosylation occurs at N474. The tract at residues 479–630 (SKQSGSFKKF…LRKRTWAGRK (152 aa)) is spacer.

As to quaternary structure, interacts with SRPX2. Zn(2+) serves as cofactor. The precursor is cleaved by a furin endopeptidase. Post-translationally, glycosylated. Can be O-fucosylated by POFUT2 on a serine or a threonine residue found within the consensus sequence C1-X(2)-(S/T)-C2-G of the TSP type-1 repeat domains where C1 and C2 are the first and second cysteine residue of the repeat, respectively. Fucosylated repeats can then be further glycosylated by the addition of a beta-1,3-glucose residue by the glucosyltransferase, B3GALTL. Fucosylation mediates the efficient secretion of ADAMTS family members. Can also be C-glycosylated with one or two mannose molecules on tryptophan residues within the consensus sequence W-X-X-W of the TPRs, and N-glycosylated. These other glycosylations can also facilitate secretion. As to expression, brain specific.

The protein resides in the secreted. It localises to the extracellular space. The protein localises to the extracellular matrix. It carries out the reaction Glutamyl endopeptidase. Bonds cleaved include 370-Thr-Glu-Gly-Glu-|-Ala-Arg-Gly-Ser-377 in the interglobular domain of mammalian aggrecan.. In terms of biological role, cleaves aggrecan, a cartilage proteoglycan, at the '392-Glu-|-Ala-393' site and may be involved in its turnover. Also cleaves COMP. May play an important role in the destruction of aggrecan in arthritic diseases. This is A disintegrin and metalloproteinase with thrombospondin motifs 4 (Adamts4) from Rattus norvegicus (Rat).